Here is a 118-residue protein sequence, read N- to C-terminus: Ribonuclease P protein component (118 aa).

This sequence belongs to the RnpA family. As to quaternary structure, consists of a catalytic RNA component (M1 or rnpB) and a protein subunit.

The enzyme catalyses Endonucleolytic cleavage of RNA, removing 5'-extranucleotides from tRNA precursor.. RNaseP catalyzes the removal of the 5'-leader sequence from pre-tRNA to produce the mature 5'-terminus. It can also cleave other RNA substrates such as 4.5S RNA. The protein component plays an auxiliary but essential role in vivo by binding to the 5'-leader sequence and broadening the substrate specificity of the ribozyme. This chain is Ribonuclease P protein component, found in Mycoplasma pneumoniae (strain ATCC 29342 / M129 / Subtype 1) (Mycoplasmoides pneumoniae).